The chain runs to 123 residues: Probable prefoldin subunit 4 (123 aa).

The protein belongs to the prefoldin subunit beta family. As to quaternary structure, heterohexamer of two PFD-alpha type and four PFD-beta type subunits.

Functionally, binds specifically to cytosolic chaperonin (c-CPN) and transfers target proteins to it. Binds to nascent polypeptide chain and promotes folding in an environment in which there are many competing pathways for nonnative proteins. This chain is Probable prefoldin subunit 4, found in Schizosaccharomyces pombe (strain 972 / ATCC 24843) (Fission yeast).